The following is an 82-amino-acid chain: Large ribosomal subunit protein bL28 (82 aa).

Residues 1–25 form a disordered region; that stretch reads MAKVDQITKKRAMTGNTRSHALNHS.

Belongs to the bacterial ribosomal protein bL28 family.

This is Large ribosomal subunit protein bL28 from Malacoplasma penetrans (strain HF-2) (Mycoplasma penetrans).